A 341-amino-acid polypeptide reads, in one-letter code: UDP-N-acetylenolpyruvoylglucosamine reductase (341 aa).

Positions 15–185 (VEQSCLSLIE…TAVGLRLPKA (171 aa)) constitute an FAD-binding PCMH-type domain. Residue Arg161 is part of the active site. Ser231 functions as the Proton donor in the catalytic mechanism. The active site involves Glu327.

This sequence belongs to the MurB family. FAD is required as a cofactor.

The protein localises to the cytoplasm. It carries out the reaction UDP-N-acetyl-alpha-D-muramate + NADP(+) = UDP-N-acetyl-3-O-(1-carboxyvinyl)-alpha-D-glucosamine + NADPH + H(+). The protein operates within cell wall biogenesis; peptidoglycan biosynthesis. Cell wall formation. This Shewanella sp. (strain ANA-3) protein is UDP-N-acetylenolpyruvoylglucosamine reductase.